The following is a 300-amino-acid chain: Protein p34 (300 aa).

5 consecutive transmembrane segments (helical) span residues 14–34 (YLSV…WVVT), 39–59 (ILAS…NLVA), 87–107 (SIFF…SLFI), 119–139 (IIMY…TYVI), and 170–190 (LSDY…LYIF).

The protein belongs to the cation diffusion facilitator (CDF) transporter (TC 2.A.4) family.

Its subcellular location is the cell membrane. This is Protein p34 (p34) from Rickettsia prowazekii (strain Madrid E).